Reading from the N-terminus, the 447-residue chain is Elongation factor 1-alpha (447 aa).

Positions 5 to 230 (KIHISIVVIG…DQISEPKRPS (226 aa)) constitute a tr-type G domain. The G1 stretch occupies residues 14–21 (GHVDSGKS). 14-21 (GHVDSGKS) is a GTP binding site. N6,N6-dimethyllysine is present on Lys55. The tract at residues 70-74 (GITID) is G2. Lys79 bears the N6,N6,N6-trimethyllysine mark. The interval 91–94 (DAPG) is G3. Residues 91–95 (DAPGH) and 153–156 (NKMD) contribute to the GTP site. Positions 153 to 156 (NKMD) are G4. An N6,N6,N6-trimethyllysine modification is found at Lys187. Residues 194–196 (SGF) form a G5 region. Lys261 is subject to N6-methyllysine. Glu289 is subject to 5-glutamyl glycerylphosphorylethanolamine. Lys306 carries the post-translational modification N6,N6,N6-trimethyllysine. Glu362 is modified (5-glutamyl glycerylphosphorylethanolamine). Lys396 carries the post-translational modification N6,N6,N6-trimethyllysine.

The protein belongs to the TRAFAC class translation factor GTPase superfamily. Classic translation factor GTPase family. EF-Tu/EF-1A subfamily.

The protein localises to the cytoplasm. Its function is as follows. This protein promotes the GTP-dependent binding of aminoacyl-tRNA to the A-site of ribosomes during protein biosynthesis. This chain is Elongation factor 1-alpha, found in Daucus carota (Wild carrot).